The following is a 415-amino-acid chain: METQQSRFLQYITRGSLVQQILLGLAAGIILASLSTQAALAAGLLGTLFVGALKAVAPILVLVLVMASIANHQQGQKTNIRPVLFLYLIGTFSAALIAVVLSVLFPSTLALNAQAADITPPSGIVEVLEGLLMSVIANPIHALLNANYIGILVWAVGLGIAFRHGSGSTKSMINDASNAVTMIVRVVIRFAPLGIFGLVASTLAETGFGALWGYAHLLMVLIGGMLLVALVVNPLIVYWKIRSNPYPLVLRCLRESGVTAFFTRSSAANIPVNMELCRKLNLDEDTYSVAIPLGATINMAGAAITITVLTLAAAHTLGIQIDVPTALLLSVVASLCACGASGVAGGSLLLIPLACSMFGISNDIAMQVVAVGFIIGVLQDSAETAVNSSTDVMFIAAVCHAEDAKLAEKERLNLL.

Helical transmembrane passes span 21–41 (ILLG…AALA), 45–65 (LGTL…LVLV), 85–105 (FLYL…SVLF), 142–162 (ALLN…GIAF), 193–213 (LGIF…ALWG), 217–237 (LLMV…PLIV), 289–309 (VAIP…ITVL), and 331–351 (VVAS…LLLI).

This sequence belongs to the dicarboxylate/amino acid:cation symporter (DAACS) (TC 2.A.23) family.

It is found in the cell inner membrane. The catalysed reaction is L-serine(in) + Na(+)(in) = L-serine(out) + Na(+)(out). It catalyses the reaction L-threonine(in) + Na(+)(in) = L-threonine(out) + Na(+)(out). In terms of biological role, involved in the import of serine and threonine into the cell, with the concomitant import of sodium (symport system). The polypeptide is Serine/threonine transporter SstT (Pectobacterium atrosepticum (strain SCRI 1043 / ATCC BAA-672) (Erwinia carotovora subsp. atroseptica)).